Consider the following 208-residue polypeptide: Ribosome maturation factor RimP (208 aa).

A disordered region spans residues 189–208 (EAPETGATTMARDGSEEETK).

This sequence belongs to the RimP family.

It is found in the cytoplasm. Its function is as follows. Required for maturation of 30S ribosomal subunits. The polypeptide is Ribosome maturation factor RimP (Ruegeria pomeroyi (strain ATCC 700808 / DSM 15171 / DSS-3) (Silicibacter pomeroyi)).